Reading from the N-terminus, the 336-residue chain is uncharacterized protein (336 aa).

This is an uncharacterized protein from Alkalihalophilus pseudofirmus (strain ATCC BAA-2126 / JCM 17055 / OF4) (Bacillus pseudofirmus).